Here is a 497-residue protein sequence, read N- to C-terminus: Pentatricopeptide repeat-containing protein At2g36240 (497 aa).

PPR repeat units lie at residues 156-186 (LEPI…MKRL), 192-226 (NVGV…RAKP), 227-261 (DVCT…GCEP), 262-296 (NVVS…GCRF), 297-331 (SEAT…RVLP), 332-366 (SEFD…GQTP), 367-401 (CFIA…GILP), 402-436 (DSVT…GYEP), and 437-471 (DETT…DMLP).

The protein belongs to the PPR family. P subfamily.

This Arabidopsis thaliana (Mouse-ear cress) protein is Pentatricopeptide repeat-containing protein At2g36240.